The following is a 621-amino-acid chain: Alpha-actinin-like protein 1 (621 aa).

2 consecutive Calponin-homology (CH) domains span residues 8-114 (SVQN…LRFT) and 123-230 (LTAK…HAFS). The interval 86–110 (LTNIGPADIVDGNLKLILGLIWTLI) is actin-binding. 3 consecutive EF-hand domains span residues 388–419 (LSTI…LGPL), 487–549 (DGIT…EIVM), and 550–618 (EELE…AEDK).

This sequence belongs to the alpha-actinin family.

Its subcellular location is the cytoplasm. It localises to the cytoskeleton. Binds to actin and is involved in actin-ring formation and organization. Plays a role in cytokinesis and is involved in septation. This chain is Alpha-actinin-like protein 1 (ain1), found in Schizosaccharomyces pombe (strain 972 / ATCC 24843) (Fission yeast).